A 544-amino-acid chain; its full sequence is Chaperonin GroEL 2 (544 aa).

ATP-binding positions include Thr29–Pro32, Asp86–Thr90, Gly413, Asn479–Ala481, and Asp495.

It belongs to the chaperonin (HSP60) family. Forms a cylinder of 14 subunits composed of two heptameric rings stacked back-to-back. Interacts with the co-chaperonin GroES.

The protein resides in the cytoplasm. The catalysed reaction is ATP + H2O + a folded polypeptide = ADP + phosphate + an unfolded polypeptide.. Its function is as follows. Together with its co-chaperonin GroES, plays an essential role in assisting protein folding. The GroEL-GroES system forms a nano-cage that allows encapsulation of the non-native substrate proteins and provides a physical environment optimized to promote and accelerate protein folding. The polypeptide is Chaperonin GroEL 2 (Synechococcus sp. (strain CC9605)).